The primary structure comprises 147 residues: Transcriptional repressor NrdR (147 aa).

Residues 3-34 fold into a zinc finger; it reads CPFCGHEDTQVAETRESDEGDVIRRRRRCPSC. In terms of domain architecture, ATP-cone spans 49–139; the sequence is PAIVKKDGSR…VYRSFEGVDE (91 aa).

This sequence belongs to the NrdR family. The cofactor is Zn(2+).

Functionally, negatively regulates transcription of bacterial ribonucleotide reductase nrd genes and operons by binding to NrdR-boxes. This is Transcriptional repressor NrdR from Methylibium petroleiphilum (strain ATCC BAA-1232 / LMG 22953 / PM1).